The chain runs to 120 residues: Large ribosomal subunit protein P3 (120 aa).

The segment at 83–120 (GGGGAAASGGAAAEAPKEEKKEEEKEESDDDMGFSLFD) is disordered.

It belongs to the eukaryotic ribosomal protein P1/P2 family. In terms of processing, phosphorylated.

In terms of biological role, plays an important role in the elongation step of protein synthesis. This Zea mays (Maize) protein is Large ribosomal subunit protein P3 (RPP3A).